The chain runs to 285 residues: Protein phosphatase 1 regulatory subunit 3B (285 aa).

The PP1-binding motif motif lies at 62 to 65; it reads RVSF. One can recognise a CBM21 domain in the interval 125–233; sequence RNRLQADHVC…SNRGKNYRII (109 aa). Position 261 is a phosphoserine (S261).

As to quaternary structure, interacts with glycogen, PPP1CC catalytic subunit of PP1 and PYGL. Associates with glycogen particles. Forms complexes with debranching enzyme, glycogen phosphorylase, glycogen synthase and phosphorylase kinase which is necessary for its regulation of PP1 activity. As to expression, highly expressed in the liver and, at lower levels, in skeletal muscle, including in vastus lateralis, gastrocnemius and soleus (at protein level). Highest mRNA levels are observed in skeletal muscle, and only moderate levels in liver and heart. Weak expression in placenta and lung.

Its function is as follows. Acts as a glycogen-targeting subunit for phosphatase PP1. Facilitates interaction of the PP1 with enzymes of the glycogen metabolism and regulates its activity. Suppresses the rate at which PP1 dephosphorylates (inactivates) glycogen phosphorylase and enhances the rate at which it activates glycogen synthase and therefore limits glycogen breakdown. Its activity is inhibited by PYGL, resulting in inhibition of the glycogen synthase and glycogen phosphorylase phosphatase activities of PP1. Dramatically increases basal and insulin-stimulated glycogen synthesis upon overexpression in hepatocytes. The chain is Protein phosphatase 1 regulatory subunit 3B (PPP1R3B) from Homo sapiens (Human).